A 488-amino-acid chain; its full sequence is 3-octaprenyl-4-hydroxybenzoate carboxy-lyase (488 aa).

Residue Asn-172 coordinates Mn(2+). Prenylated FMN is bound by residues 175–177, 189–191, and 194–195; these read IYR, RWL, and RG. Mn(2+) is bound at residue Glu-238. Asp-287 serves as the catalytic Proton donor.

It belongs to the UbiD family. As to quaternary structure, homohexamer. It depends on prenylated FMN as a cofactor. The cofactor is Mn(2+).

It is found in the cell membrane. It catalyses the reaction a 4-hydroxy-3-(all-trans-polyprenyl)benzoate + H(+) = a 2-(all-trans-polyprenyl)phenol + CO2. It participates in cofactor biosynthesis; ubiquinone biosynthesis. Its function is as follows. Catalyzes the decarboxylation of 3-octaprenyl-4-hydroxy benzoate to 2-octaprenylphenol, an intermediate step in ubiquinone biosynthesis. This Legionella pneumophila (strain Lens) protein is 3-octaprenyl-4-hydroxybenzoate carboxy-lyase.